The following is a 39-amino-acid chain: Photosystem II reaction center protein L (39 aa).

Residues 18-38 (SLYLGLLSVLVLGILFSSYFF) form a helical membrane-spanning segment.

The protein belongs to the PsbL family. In terms of assembly, PSII is composed of 1 copy each of membrane proteins PsbA, PsbB, PsbC, PsbD, PsbE, PsbF, PsbH, PsbI, PsbJ, PsbK, PsbL, PsbM, PsbT, PsbX, PsbY, Psb30/Ycf12, peripheral proteins PsbO, CyanoQ (PsbQ), PsbU, PsbV and a large number of cofactors. It forms dimeric complexes.

The protein localises to the cellular thylakoid membrane. Its function is as follows. One of the components of the core complex of photosystem II (PSII). PSII is a light-driven water:plastoquinone oxidoreductase that uses light energy to abstract electrons from H(2)O, generating O(2) and a proton gradient subsequently used for ATP formation. It consists of a core antenna complex that captures photons, and an electron transfer chain that converts photonic excitation into a charge separation. This subunit is found at the monomer-monomer interface and is required for correct PSII assembly and/or dimerization. The polypeptide is Photosystem II reaction center protein L (Prochlorococcus marinus subsp. pastoris (strain CCMP1986 / NIES-2087 / MED4)).